Here is a 382-residue protein sequence, read N- to C-terminus: Pyrimidine monooxygenase RutA (382 aa).

FMN-binding positions include 68–69 (IK), Asn-134, Glu-143, 159–160 (RY), and Ser-209.

The protein belongs to the NtaA/SnaA/DszA monooxygenase family. RutA subfamily.

The enzyme catalyses uracil + FMNH2 + NADH + O2 = (Z)-3-ureidoacrylate + FMN + NAD(+) + H2O + H(+). It catalyses the reaction thymine + FMNH2 + NADH + O2 = (Z)-2-methylureidoacrylate + FMN + NAD(+) + H2O + H(+). In terms of biological role, catalyzes the pyrimidine ring opening between N-3 and C-4 by an unusual flavin hydroperoxide-catalyzed mechanism, adding oxygen atoms in the process to yield ureidoacrylate peracid, that immediately reacts with FMN forming ureidoacrylate and FMN-N(5)-oxide. The FMN-N(5)-oxide reacts spontaneously with NADH to produce FMN. Requires the flavin reductase RutF to regenerate FMN in vivo. The chain is Pyrimidine monooxygenase RutA from Escherichia coli (strain 55989 / EAEC).